The primary structure comprises 707 residues: MASEEYGEPAKHDPSFKGPIKKRGCTDIICCVLFMVFLLGYMVVGILAWLYGDPRQVIYPRNSTGMYCGIGENQGKPNVLYYDLLKCVTGTNILAAAMNGLQCPTTQVCVATCPMDFKWALPNGSPASVYIQEYCQPSINLTTTPLTVAQIAAKELCPVFLVPSTSFFNRCFPGSNLTFPSDFTINGLTANQSRANISEAASQILDSFNFQNVGKKIFEDFAKSWPWIITALVIAMVVSLLFLILLRFTAGILVWVLIVGVIGVIGYGIYHCYMEYDTLNKQGVSVSDVGFTFNLGVYFRVKETWLAILIVLAVVEAILLLVLLFLRKRILIAIALIKEASKAIGHIMSSLFYPLVTFVLLVVCVAYWGMTALYLATSGAPIYRISTVNTSVPGCENITGNETCNPMTFKPSSSCNEARCIFYRYNNEGLFQTNLFNLQIYNVIGFLWCINFVIALGQCVLAGAFASYYWAFHKPKDIPFFPVAESFMRTLRYHTGSLAFGSLILTIVQLIRIILEYVDHKLKGAQNPCTRFLLCCLKCCFWCLEKFIKFLNRNAYIMIAVYGKNFCVSAKNAFKLLMRNIVRVVVLDKVTDLLIFFGKLIVVGGVGVLAFFFFSGRIPIPNDSFKSPTLNYYWIPIITVVLGSYMIAHGFFSVYNMCVDTLFLCFLEDLERNDGSQEKPYYMSKSLMSILNKKNRPPKSEEKKKKK.

At 1–27 (MASEEYGEPAKHDPSFKGPIKKRGCTD) the chain is on the cytoplasmic side. A helical transmembrane segment spans residues 28-48 (IICCVLFMVFLLGYMVVGILA). The Extracellular portion of the chain corresponds to 49-225 (WLYGDPRQVI…KIFEDFAKSW (177 aa)). N-linked (GlcNAc...) asparagine glycans are attached at residues Asn-62, Asn-140, Asn-176, Asn-191, and Asn-196. The chain crosses the membrane as a helical span at residues 226-246 (PWIITALVIAMVVSLLFLILL). At 247-249 (RFT) the chain is on the cytoplasmic side. The chain crosses the membrane as a helical span at residues 250-270 (AGILVWVLIVGVIGVIGYGIY). The Extracellular segment spans residues 271–305 (HCYMEYDTLNKQGVSVSDVGFTFNLGVYFRVKETW). Residues 306-326 (LAILIVLAVVEAILLLVLLFL) traverse the membrane as a helical segment. The Cytoplasmic portion of the chain corresponds to 327 to 354 (RKRILIAIALIKEASKAIGHIMSSLFYP). The chain crosses the membrane as a helical span at residues 355–375 (LVTFVLLVVCVAYWGMTALYL). The Extracellular portion of the chain corresponds to 376-442 (ATSGAPIYRI…TNLFNLQIYN (67 aa)). N-linked (GlcNAc...) asparagine glycosylation is found at Asn-389, Asn-397, and Asn-401. The helical transmembrane segment at 443–463 (VIGFLWCINFVIALGQCVLAG) threads the bilayer. Topologically, residues 464–494 (AFASYYWAFHKPKDIPFFPVAESFMRTLRYH) are cytoplasmic. Residues 495 to 515 (TGSLAFGSLILTIVQLIRIIL) form a helical membrane-spanning segment. Residues 516–556 (EYVDHKLKGAQNPCTRFLLCCLKCCFWCLEKFIKFLNRNAY) are Extracellular-facing. Residues 557–577 (IMIAVYGKNFCVSAKNAFKLL) traverse the membrane as a helical segment. Residues 578–593 (MRNIVRVVVLDKVTDL) are Cytoplasmic-facing. A helical membrane pass occupies residues 594–614 (LIFFGKLIVVGGVGVLAFFFF). At 615–633 (SGRIPIPNDSFKSPTLNYY) the chain is on the extracellular side. A glycan (N-linked (GlcNAc...) asparagine) is linked at Asn-622. Residues 634–654 (WIPIITVVLGSYMIAHGFFSV) traverse the membrane as a helical segment. At 655-707 (YNMCVDTLFLCFLEDLERNDGSQEKPYYMSKSLMSILNKKNRPPKSEEKKKKK) the chain is on the cytoplasmic side.

The protein belongs to the CTL (choline transporter-like) family.

Its subcellular location is the membrane. It is found in the apical cell membrane. The catalysed reaction is choline(out) + n H(+)(in) = choline(in) + n H(+)(out). It catalyses the reaction thiamine diphosphate(out) = thiamine diphosphate(in). In terms of biological role, choline transporter that seems to play a role in the choline-acetylcholine system and is required to the efferent innervation of hair cells in the olivocochlear bundle for the maintenance of physiological function of outer hair cells and the protection of hair cells from acoustic injury. Also described as a thiamine pyrophosphate transporter. Functionally, also described as a thiamine pyrophosphate transporter. This Xenopus laevis (African clawed frog) protein is Choline transporter-like protein 4 (slc44a4).